We begin with the raw amino-acid sequence, 409 residues long: Ingression protein 1 (409 aa).

Residues 1-114 (MSEEVWNGNQ…DPKEGYCTWY (114 aa)) form the C2 domain. Residues 300-409 (LSYDEDDDDD…TRKRPPPRLS (110 aa)) form a disordered region. Over residues 302-313 (YDEDDDDDDEND) the composition is skewed to acidic residues. Over residues 315 to 328 (FYSSSHRVSHNYNQ) the composition is skewed to polar residues. A compositionally biased stretch (low complexity) spans 360 to 377 (LDSSSPNSHPHPSGLNSP). Over residues 384–399 (TTSNSNFNSRKNSMSP) the composition is skewed to polar residues. Ser-392 is modified (phosphoserine). Over residues 400-409 (TRKRPPPRLS) the composition is skewed to basic residues.

It belongs to the INN1/fic1 family. Interacts with CYK2, CYK3 and IQG1.

The protein resides in the bud neck. Functionally, required for the ingression of the plasma membrane into the bud neck at the end of cytokinesis, leading to the separation of the mother and daughter cells. Stimulates the synthesis of the primary septum (PS) by CHS2. The chain is Ingression protein 1 (INN1) from Saccharomyces cerevisiae (strain ATCC 204508 / S288c) (Baker's yeast).